Here is a 784-residue protein sequence, read N- to C-terminus: Lon protease (784 aa).

The 194-residue stretch at 11-204 (IPVLPLRDVV…YLMAMMESEI (194 aa)) folds into the Lon N-terminal domain. Position 356–363 (356–363 (GPPGVGKT)) interacts with ATP. The Lon proteolytic domain maps to 592–773 (ENRVGQVTGL…EEVLTLALQN (182 aa)). Active-site residues include Ser679 and Lys722.

The protein belongs to the peptidase S16 family. In terms of assembly, homohexamer. Organized in a ring with a central cavity. ATP binding and hydrolysis do not affect the oligomeric state of the enzyme.

It localises to the cytoplasm. The enzyme catalyses Hydrolysis of proteins in presence of ATP.. Its activity is regulated as follows. Contains an allosteric site (distinct from its active site), whose occupancy by an unfolded polypeptide leads to enzyme activation. In terms of biological role, ATP-dependent serine protease that mediates the selective degradation of mutant and abnormal proteins as well as certain short-lived regulatory proteins. Required for cellular homeostasis and for survival from DNA damage and developmental changes induced by stress. Degrades polypeptides processively to yield small peptide fragments that are 5 to 10 amino acids long. Binds to DNA in a double-stranded, site-specific manner. Endogenous substrates include the regulatory proteins RcsA and SulA, the transcriptional activator SoxS, and UmuD. Its overproduction specifically inhibits translation through at least two different pathways, one of them being the YoeB-YefM toxin-antitoxin system. This chain is Lon protease, found in Escherichia coli O6:H1 (strain CFT073 / ATCC 700928 / UPEC).